We begin with the raw amino-acid sequence, 210 residues long: Protein DrgA (210 aa).

The protein belongs to the nitroreductase family. FMN serves as cofactor.

Functionally, controls resistance to the herbicide Dinoseb and metronidazole. Involved in detoxification of Dinoseb via the reduction of the nitro group(s) and this process is accompanied by the formation of toxic superoxide anions. This is Protein DrgA (drgA) from Synechocystis sp. (strain ATCC 27184 / PCC 6803 / Kazusa).